Here is a 253-residue protein sequence, read N- to C-terminus: Major prion protein (253 aa).

An N-terminal signal peptide occupies residues 1 to 22 (MANLGCWMLVLFVATWSNLGLC). The segment at 23–38 (KKRPKPGGWNTGGSRY) is interaction with ADGRG6. The segment at 23 to 230 (KKRPKPGGWN…ESQAYYQRGS (208 aa)) is interaction with GRB2, ERI3 and SYN1. A disordered region spans residues 25–108 (RPKPGGWNTG…WNKPSKPKTN (84 aa)). 5 consecutive repeat copies span residues 51–59 (PQGGGGWGQ), 60–67 (PHGGGWGQ), 68–75 (PHGGGWGQ), 76–83 (PHGGGWGQ), and 84–91 (PHGGGWGQ). A 5 X 8 AA tandem repeats of P-H-G-G-G-W-G-Q region spans residues 51–91 (PQGGGGWGQPHGGGWGQPHGGGWGQPHGGGWGQPHGGGWGQ). The segment covering 52-95 (QGGGGWGQPHGGGWGQPHGGGWGQPHGGGWGQPHGGGWGQGGGT) has biased composition (gly residues). Residues His-61, Gly-62, Gly-63, His-69, Gly-70, Gly-71, His-77, Gly-78, Gly-79, His-85, Gly-86, and Gly-87 each contribute to the Cu(2+) site. A disulfide bridge connects residues Cys-179 and Cys-214. 2 N-linked (GlcNAc...) asparagine glycosylation sites follow: Asn-181 and Asn-197. Ser-230 is lipidated: GPI-anchor amidated serine. A propeptide spans 231 to 253 (SMVLFSSPPVILLISFLIFLIVG) (removed in mature form).

The protein belongs to the prion family. As to quaternary structure, monomer and homodimer. Has a tendency to aggregate into amyloid fibrils containing a cross-beta spine, formed by a steric zipper of superposed beta-strands. Soluble oligomers may represent an intermediate stage on the path to fibril formation. Copper binding may promote oligomerization. Interacts with GRB2, APP, ERI3/PRNPIP and SYN1. Mislocalized cytosolically exposed PrP interacts with MGRN1; this interaction alters MGRN1 subcellular location and causes lysosomal enlargement. Interacts with APP. Interacts with KIAA1191. Interacts with ADGRG6.

It is found in the cell membrane. The protein resides in the golgi apparatus. Functionally, its primary physiological function is unclear. May play a role in neuronal development and synaptic plasticity. May be required for neuronal myelin sheath maintenance. May promote myelin homeostasis through acting as an agonist for ADGRG6 receptor. May play a role in iron uptake and iron homeostasis. Soluble oligomers are toxic to cultured neuroblastoma cells and induce apoptosis (in vitro). Association with GPC1 (via its heparan sulfate chains) targets PRNP to lipid rafts. Also provides Cu(2+) or Zn(2+) for the ascorbate-mediated GPC1 deaminase degradation of its heparan sulfate side chains. The chain is Major prion protein (PRNP) from Pongo pygmaeus (Bornean orangutan).